Here is a 369-residue protein sequence, read N- to C-terminus: Phosphoribosylformylglycinamidine cyclo-ligase (369 aa).

Residues 1 to 22 (MSKRDTSQPKTGQPKTSKRRNG) form a disordered region.

The protein belongs to the AIR synthase family.

It is found in the cytoplasm. The enzyme catalyses 2-formamido-N(1)-(5-O-phospho-beta-D-ribosyl)acetamidine + ATP = 5-amino-1-(5-phospho-beta-D-ribosyl)imidazole + ADP + phosphate + H(+). It functions in the pathway purine metabolism; IMP biosynthesis via de novo pathway; 5-amino-1-(5-phospho-D-ribosyl)imidazole from N(2)-formyl-N(1)-(5-phospho-D-ribosyl)glycinamide: step 2/2. In Mesorhizobium japonicum (strain LMG 29417 / CECT 9101 / MAFF 303099) (Mesorhizobium loti (strain MAFF 303099)), this protein is Phosphoribosylformylglycinamidine cyclo-ligase.